Here is a 146-residue protein sequence, read N- to C-terminus: Small ribosomal subunit protein eS17 (146 aa).

It belongs to the eukaryotic ribosomal protein eS17 family. As to quaternary structure, component of the small ribosomal subunit (SSU). Mature N.crassa ribosomes consist of a small (40S) and a large (60S) subunit. The 40S small subunit contains 1 molecule of ribosomal RNA (18S rRNA) and at least 32 different proteins. The large 60S subunit contains 3 rRNA molecules (26S, 5.8S and 5S rRNA) and at least 42 different proteins.

It localises to the cytoplasm. Component of the ribosome, a large ribonucleoprotein complex responsible for the synthesis of proteins in the cell. The small ribosomal subunit (SSU) binds messenger RNAs (mRNAs) and translates the encoded message by selecting cognate aminoacyl-transfer RNA (tRNA) molecules. The large subunit (LSU) contains the ribosomal catalytic site termed the peptidyl transferase center (PTC), which catalyzes the formation of peptide bonds, thereby polymerizing the amino acids delivered by tRNAs into a polypeptide chain. The nascent polypeptides leave the ribosome through a tunnel in the LSU and interact with protein factors that function in enzymatic processing, targeting, and the membrane insertion of nascent chains at the exit of the ribosomal tunnel. In Neurospora crassa (strain ATCC 24698 / 74-OR23-1A / CBS 708.71 / DSM 1257 / FGSC 987), this protein is Small ribosomal subunit protein eS17 (rps-17).